A 335-amino-acid chain; its full sequence is MIEADRIISTSAKGDEEYIDRAIRPKLLNDYVGQPHVCEQMAIFIQAAKLRQDALDHLLIFGPPGLGKTTLANIVAHEMGVNIRTTSGPVLEKAGDLAAMLTNLEPHDVLFIDEIHRLSPAIEEVLYPAMEDYQLDIMIGEGPAARSIKLDLPPFTLIGATTRAGSLTSPLRDRFGIVQRLEFYAVEDLTSIVARSANCLNLSISDTACYEIARRSRGTPRIANRLLRRVRDFADVRHAGIISEESAKAALLMLDVDDAGFDYLDRKLLNAVIERFDGGPVGLDNLAAAIGEERETIEDVLEPYLIQQGFLQRTPRGRMATSRTYRYFGLEKLTE.

The interval 4–184 (ADRIISTSAK…FGIVQRLEFY (181 aa)) is large ATPase domain (RuvB-L). ATP is bound by residues isoleucine 23, arginine 24, glycine 65, lysine 68, threonine 69, threonine 70, 131 to 133 (EDY), arginine 174, tyrosine 184, and arginine 221. Threonine 69 serves as a coordination point for Mg(2+). The interval 185 to 255 (AVEDLTSIVA…SAKAALLMLD (71 aa)) is small ATPAse domain (RuvB-S). A head domain (RuvB-H) region spans residues 258–335 (DAGFDYLDRK…RYFGLEKLTE (78 aa)). Residues arginine 294, arginine 313, and arginine 318 each contribute to the DNA site.

The protein belongs to the RuvB family. As to quaternary structure, homohexamer. Forms an RuvA(8)-RuvB(12)-Holliday junction (HJ) complex. HJ DNA is sandwiched between 2 RuvA tetramers; dsDNA enters through RuvA and exits via RuvB. An RuvB hexamer assembles on each DNA strand where it exits the tetramer. Each RuvB hexamer is contacted by two RuvA subunits (via domain III) on 2 adjacent RuvB subunits; this complex drives branch migration. In the full resolvosome a probable DNA-RuvA(4)-RuvB(12)-RuvC(2) complex forms which resolves the HJ.

Its subcellular location is the cytoplasm. The enzyme catalyses ATP + H2O = ADP + phosphate + H(+). The RuvA-RuvB-RuvC complex processes Holliday junction (HJ) DNA during genetic recombination and DNA repair, while the RuvA-RuvB complex plays an important role in the rescue of blocked DNA replication forks via replication fork reversal (RFR). RuvA specifically binds to HJ cruciform DNA, conferring on it an open structure. The RuvB hexamer acts as an ATP-dependent pump, pulling dsDNA into and through the RuvAB complex. RuvB forms 2 homohexamers on either side of HJ DNA bound by 1 or 2 RuvA tetramers; 4 subunits per hexamer contact DNA at a time. Coordinated motions by a converter formed by DNA-disengaged RuvB subunits stimulates ATP hydrolysis and nucleotide exchange. Immobilization of the converter enables RuvB to convert the ATP-contained energy into a lever motion, pulling 2 nucleotides of DNA out of the RuvA tetramer per ATP hydrolyzed, thus driving DNA branch migration. The RuvB motors rotate together with the DNA substrate, which together with the progressing nucleotide cycle form the mechanistic basis for DNA recombination by continuous HJ branch migration. Branch migration allows RuvC to scan DNA until it finds its consensus sequence, where it cleaves and resolves cruciform DNA. The protein is Holliday junction branch migration complex subunit RuvB of Pasteurella multocida (strain Pm70).